Consider the following 59-residue polypeptide: Crassipeptide cce9a (59 aa).

Residues 1–30 (ADNHARVAGPRAVASGRYATEKAFLQMMTR) constitute a propeptide that is removed on maturation.

Post-translationally, contains 3 disulfide bonds. In terms of tissue distribution, expressed by the venom duct.

Its subcellular location is the secreted. Functionally, crassispirid snail peptide that induces sleep-like symptoms in young mice (12 and 14 days) and hyperactivity in older mice (16 days), when intracranially injected. The sequence is that of Crassipeptide cce9a from Crassispira cerithina (Sea snail).